The chain runs to 583 residues: Ribosomal lysine N-methyltransferase 1 (583 aa).

The SET domain occupies Glu-22 to Gly-274. Tyr-273 is an S-adenosyl-L-methionine binding site. Coiled-coil stretches lie at residues Lys-378–Ser-407 and Lys-433–His-459.

This sequence belongs to the class V-like SAM-binding methyltransferase superfamily. RKM1 family.

Its subcellular location is the cytoplasm. The protein localises to the nucleus. S-adenosyl-L-methionine-dependent protein-lysine N-methyltransferase that monomethylates ribosomal protein S18 (RPS18A and RPS18B) at 'Lys-48' and dimethylates ribosomal protein L23 (RPL23A and RPL23B) at 'Lys-106' and 'Lys-110'. This chain is Ribosomal lysine N-methyltransferase 1, found in Saccharomyces cerevisiae (strain ATCC 204508 / S288c) (Baker's yeast).